Consider the following 518-residue polypeptide: Chromosomal replication initiator protein DnaA (518 aa).

The domain I, interacts with DnaA modulators stretch occupies residues 1-72 (MTLAEFWPLC…VREELAAGRS (72 aa)). The interval 72–180 (SAFVFKPGEG…DAEEARYEQT (109 aa)) is domain II. Positions 145–172 (EPRQAAGSASRPESVAVAKARTDVQRDA) are disordered. The segment at 181–397 (NLSPDYTFDT…GAFNRVGASS (217 aa)) is domain III, AAA+ region. 4 residues coordinate ATP: G225, G227, K228, and T229. A domain IV, binds dsDNA region spans residues 398 to 518 (RFMNRPVIDI…YEKLLILIQN (121 aa)).

It belongs to the DnaA family. As to quaternary structure, oligomerizes as a right-handed, spiral filament on DNA at oriC.

It is found in the cytoplasm. Plays an essential role in the initiation and regulation of chromosomal replication. ATP-DnaA binds to the origin of replication (oriC) to initiate formation of the DNA replication initiation complex once per cell cycle. Binds the DnaA box (a 9 base pair repeat at the origin) and separates the double-stranded (ds)DNA. Forms a right-handed helical filament on oriC DNA; dsDNA binds to the exterior of the filament while single-stranded (ss)DNA is stabiized in the filament's interior. The ATP-DnaA-oriC complex binds and stabilizes one strand of the AT-rich DNA unwinding element (DUE), permitting loading of DNA polymerase. After initiation quickly degrades to an ADP-DnaA complex that is not apt for DNA replication. Binds acidic phospholipids. The chain is Chromosomal replication initiator protein DnaA from Neisseria meningitidis serogroup B (strain ATCC BAA-335 / MC58).